The sequence spans 463 residues: Fumarate hydratase class II (463 aa).

Residues 98-100 (SGT), 129-132 (HPND), 139-141 (SSN), and Thr187 contribute to the substrate site. His188 functions as the Proton donor/acceptor in the catalytic mechanism. Residue Ser318 is part of the active site. Substrate is bound by residues Ser319 and 324–326 (KVN).

This sequence belongs to the class-II fumarase/aspartase family. Fumarase subfamily. Homotetramer.

The protein localises to the cytoplasm. It carries out the reaction (S)-malate = fumarate + H2O. The protein operates within carbohydrate metabolism; tricarboxylic acid cycle; (S)-malate from fumarate: step 1/1. Involved in the TCA cycle. Catalyzes the stereospecific interconversion of fumarate to L-malate. In Caulobacter vibrioides (strain ATCC 19089 / CIP 103742 / CB 15) (Caulobacter crescentus), this protein is Fumarate hydratase class II.